Consider the following 384-residue polypeptide: Flap endonuclease 1 (384 aa).

The segment at 1 to 105 (MGVKGLNQLI…GELEKRLLKR (105 aa)) is N-domain. Residue Asp34 coordinates Mg(2+). Residues Arg47 and Arg71 each coordinate DNA. Asp87, Glu159, Glu161, Asp180, and Asp182 together coordinate Mg(2+). Residues 123–254 (DMTKYQKRLV…VTAYKLIKEH (132 aa)) are I-domain. DNA is bound at residue Glu159. Gly232 and Asp234 together coordinate DNA. Asp234 serves as a coordination point for Mg(2+). Residues 341–349 (IQGRLDGFF) are interaction with PCNA. Residues 354–384 (KYSNTSPLGKDDKKRKTNDKKGAAAKKTKRR) are disordered. The span at 362–375 (GKDDKKRKTNDKKG) shows a compositional bias: basic and acidic residues.

This sequence belongs to the XPG/RAD2 endonuclease family. FEN1 subfamily. In terms of assembly, interacts with PCNA. Three molecules of FEN1 bind to one PCNA trimer with each molecule binding to one PCNA monomer. PCNA stimulates the nuclease activity without altering cleavage specificity. The cofactor is Mg(2+). Phosphorylated. Phosphorylation upon DNA damage induces relocalization to the nuclear plasma.

Its subcellular location is the nucleus. It is found in the nucleolus. The protein resides in the nucleoplasm. It localises to the mitochondrion. Its function is as follows. Structure-specific nuclease with 5'-flap endonuclease and 5'-3' exonuclease activities involved in DNA replication and repair. During DNA replication, cleaves the 5'-overhanging flap structure that is generated by displacement synthesis when DNA polymerase encounters the 5'-end of a downstream Okazaki fragment. It enters the flap from the 5'-end and then tracks to cleave the flap base, leaving a nick for ligation. Also involved in the long patch base excision repair (LP-BER) pathway, by cleaving within the apurinic/apyrimidinic (AP) site-terminated flap. Acts as a genome stabilization factor that prevents flaps from equilibrating into structures that lead to duplications and deletions. Also possesses 5'-3' exonuclease activity on nicked or gapped double-stranded DNA, and exhibits RNase H activity. Also involved in replication and repair of rDNA and in repairing mitochondrial DNA. The sequence is that of Flap endonuclease 1 from Lodderomyces elongisporus (strain ATCC 11503 / CBS 2605 / JCM 1781 / NBRC 1676 / NRRL YB-4239) (Yeast).